The sequence spans 273 residues: Shikimate dehydrogenase (NADP(+)) (273 aa).

Residues 15 to 17 (SQS) and Thr-62 each bind shikimate. Lys-66 (proton acceptor) is an active-site residue. Glu-78 lines the NADP(+) pocket. Residues Asn-87 and Asp-102 each contribute to the shikimate site. NADP(+) contacts are provided by residues 127 to 131 (GAGGA), 151 to 156 (NRTVIK), and Met-215. A shikimate-binding site is contributed by Tyr-217. Gly-239 is a binding site for NADP(+).

The protein belongs to the shikimate dehydrogenase family. In terms of assembly, homodimer.

The catalysed reaction is shikimate + NADP(+) = 3-dehydroshikimate + NADPH + H(+). It participates in metabolic intermediate biosynthesis; chorismate biosynthesis; chorismate from D-erythrose 4-phosphate and phosphoenolpyruvate: step 4/7. Its function is as follows. Involved in the biosynthesis of the chorismate, which leads to the biosynthesis of aromatic amino acids. Catalyzes the reversible NADPH linked reduction of 3-dehydroshikimate (DHSA) to yield shikimate (SA). This Chromobacterium violaceum (strain ATCC 12472 / DSM 30191 / JCM 1249 / CCUG 213 / NBRC 12614 / NCIMB 9131 / NCTC 9757 / MK) protein is Shikimate dehydrogenase (NADP(+)).